The chain runs to 581 residues: Phosphoglucomutase, cytoplasmic (581 aa).

Residues 1–11 (MVFSVAKKDTT) are compositionally biased toward basic and acidic residues. A disordered region spans residues 1–20 (MVFSVAKKDTTPYEGQKPGT). The alpha-D-glucose 1,6-bisphosphate site is built by Arg24 and Ser123. Residue Ser123 is the Phosphoserine intermediate of the active site. Mg(2+)-binding residues include Ser123, Asp298, Asp300, and Asp302. Ser123 is modified (phosphoserine). Asp302, Arg303, Thr366, Glu385, Ser387, and Lys398 together coordinate alpha-D-glucose 1,6-bisphosphate.

This sequence belongs to the phosphohexose mutase family. As to quaternary structure, monomer. Mg(2+) is required as a cofactor.

It localises to the cytoplasm. The enzyme catalyses alpha-D-glucose 1-phosphate = alpha-D-glucose 6-phosphate. It carries out the reaction O-phospho-L-seryl-[protein] + alpha-D-glucose 1-phosphate = alpha-D-glucose 1,6-bisphosphate + L-seryl-[protein]. The catalysed reaction is alpha-D-glucose 1,6-bisphosphate + L-seryl-[protein] = O-phospho-L-seryl-[protein] + alpha-D-glucose 6-phosphate. Its function is as follows. Catalyzes the reversible isomerization of alpha-D-glucose 1-phosphate to alpha-D-glucose 6-phosphate. The mechanism proceeds via the intermediate compound alpha-D-glucose 1,6-bisphosphate. This enzyme participates in both the breakdown and synthesis of glucose. In Bromus inermis (Smooth brome grass), this protein is Phosphoglucomutase, cytoplasmic (PGM1).